Here is a 159-residue protein sequence, read N- to C-terminus: Ribosomal RNA large subunit methyltransferase H (159 aa).

S-adenosyl-L-methionine contacts are provided by residues L76, G108, and 127–132 (FSKMTF).

This sequence belongs to the RNA methyltransferase RlmH family. As to quaternary structure, homodimer.

It is found in the cytoplasm. It catalyses the reaction pseudouridine(1915) in 23S rRNA + S-adenosyl-L-methionine = N(3)-methylpseudouridine(1915) in 23S rRNA + S-adenosyl-L-homocysteine + H(+). In terms of biological role, specifically methylates the pseudouridine at position 1915 (m3Psi1915) in 23S rRNA. The protein is Ribosomal RNA large subunit methyltransferase H of Clostridium botulinum (strain Alaska E43 / Type E3).